The chain runs to 463 residues: Argininosuccinate lyase (463 aa).

It belongs to the lyase 1 family. Argininosuccinate lyase subfamily.

It is found in the cytoplasm. It carries out the reaction 2-(N(omega)-L-arginino)succinate = fumarate + L-arginine. Its pathway is amino-acid biosynthesis; L-arginine biosynthesis; L-arginine from L-ornithine and carbamoyl phosphate: step 3/3. This chain is Argininosuccinate lyase, found in Bradyrhizobium sp. (strain ORS 278).